Consider the following 190-residue polypeptide: Threonylcarbamoyl-AMP synthase (190 aa).

The YrdC-like domain maps to 7-190 (TGSIAAVVDL…ALTGELFRQG (184 aa)).

Belongs to the SUA5 family. TsaC subfamily.

The protein resides in the cytoplasm. The enzyme catalyses L-threonine + hydrogencarbonate + ATP = L-threonylcarbamoyladenylate + diphosphate + H2O. Required for the formation of a threonylcarbamoyl group on adenosine at position 37 (t(6)A37) in tRNAs that read codons beginning with adenine. Catalyzes the conversion of L-threonine, HCO(3)(-)/CO(2) and ATP to give threonylcarbamoyl-AMP (TC-AMP) as the acyladenylate intermediate, with the release of diphosphate. This chain is Threonylcarbamoyl-AMP synthase, found in Salmonella paratyphi A (strain ATCC 9150 / SARB42).